Here is a 229-residue protein sequence, read N- to C-terminus: Prolactin (229 aa).

A signal peptide spans 1–30 (MDKKGWSLKGSLLPLLLLVSDLLLCQSVAS). A disulfide bridge connects residues cysteine 34 and cysteine 41. Serine 56, serine 64, and serine 120 each carry phosphoserine. Cystine bridges form between cysteine 88/cysteine 204 and cysteine 221/cysteine 229.

The protein belongs to the somatotropin/prolactin family. In terms of assembly, interacts with PRLR.

The protein localises to the secreted. Its function is as follows. Prolactin acts primarily on the mammary gland by promoting lactation. This Ailuropoda melanoleuca (Giant panda) protein is Prolactin (PRL).